The following is a 305-amino-acid chain: Thyroxine 5-deiodinase (305 aa).

Over 1-43 the chain is Cytoplasmic; sequence MPGQAGRRRLVGGGCRGSQGPLGGAATMLRSLLLHSLRLCAQT. The chain crosses the membrane as a helical; Signal-anchor for type II membrane protein span at residues 44–63; that stretch reads ASCLVLFPRFLGTACMLWLL. Residues 64-305 lie on the Extracellular side of the membrane; it reads DFLCIRKHLL…QLHGPQPRRV (242 aa). Residues 79 to 98 are disordered; the sequence is GEPETEVELNSDGDEVPPDD. A compositionally biased stretch (acidic residues) spans 82 to 96; the sequence is ETEVELNSDGDEVPP. The active site involves Sec-171. Sec-171 is a non-standard amino acid (selenocysteine).

This sequence belongs to the iodothyronine deiodinase family. In terms of assembly, monomer. Homodimer. May undergo minor heretodimerization with DIO1 and DIO2. As to expression, expressed in brain only.

Its subcellular location is the cell membrane. The protein resides in the endosome membrane. It catalyses the reaction 3,3',5'-triiodo-L-thyronine + iodide + A + H(+) = L-thyroxine + AH2. The catalysed reaction is 3,3'-diiodo-L-thyronine + iodide + A + H(+) = 3,3',5-triiodo-L-thyronine + AH2. The enzyme catalyses 3-iodo-L-thyronine + iodide + A + H(+) = 3,5-diiodo-L-thyronine + AH2. It carries out the reaction L-thyronine + iodide + A + H(+) = 3-iodo-L-thyronine + AH2. It catalyses the reaction 3',5'-diiodo-L-thyronine + iodide + A + H(+) = 3,3',5'-triiodo-L-thyronine + AH2. The catalysed reaction is 3'-iodo-L-thyronine + iodide + A + H(+) = 3,3'-diiodo-L-thyronine + AH2. The enzyme catalyses 3,3',5'-triiodothyronamine + iodide + A + H(+) = 3,3',5,5'-tetraiodothyronamine + AH2. It carries out the reaction 3',5'-diiodothyronamine + iodide + A + H(+) = 3,3',5'-triiodothyronamine + AH2. It catalyses the reaction 3,3'-diiodothyronamine + iodide + A + H(+) = 3,3',5-triiodothyronamine + AH2. The catalysed reaction is 3-iodothyronamine + iodide + A + H(+) = 3,5-diiodothyronamine + AH2. The enzyme catalyses 3'-iodothyronamine + iodide + A + H(+) = 3,3'-diiodothyronamine + AH2. It carries out the reaction thyronamine + iodide + A + H(+) = 3-iodothyronamine + AH2. Its function is as follows. Plays a crucial role in the metabolism of thyroid hormones (TH) and has specific roles in TH activation and inactivation by deiodination, particularly in different tissues. Catalyzes the deiodination of L-thyroxine (T4) to 3,3',5'-triiodothyronine (rT3), 3,5-diiodothyronine (3,5-T2) to 3-monoiodothyronine (3-T1), rT3 to 3',5'-diiodothyronine (3',5'-T2) and 3,3'-diiodothyronine (3,3'-T2) to 3'-monoiodothyronine (3'-T1) via inner-ring deiodination (IRD). Catalyzes the deiodination of 3,5,3'-triiodothyronine (T3) to 3,3'-diiodothyronine (3,3'-T2) via IRD. Catalyzes the deiodination of 3-T1 to L-thyronine (T0) via outer-ring deiodination (ORD). Catalyzes the tyrosyl ring deiodinations of 3,3',5,5'-tetraiodothyronamine, 3,3',5'-triiodothyronamine, 3,5,3'-triiodothyronamine, 3,5-diiodothyronamine, 3,3'-diiodothyronamine and 3-iodothyronamine. The chain is Thyroxine 5-deiodinase (DIO3) from Sus scrofa (Pig).